The chain runs to 166 residues: SsrA-binding protein (166 aa).

Positions 146–166 are disordered; it reads KRAAEKEKQSKKDVKAAMERY.

The protein belongs to the SmpB family.

The protein resides in the cytoplasm. Its function is as follows. Required for rescue of stalled ribosomes mediated by trans-translation. Binds to transfer-messenger RNA (tmRNA), required for stable association of tmRNA with ribosomes. tmRNA and SmpB together mimic tRNA shape, replacing the anticodon stem-loop with SmpB. tmRNA is encoded by the ssrA gene; the 2 termini fold to resemble tRNA(Ala) and it encodes a 'tag peptide', a short internal open reading frame. During trans-translation Ala-aminoacylated tmRNA acts like a tRNA, entering the A-site of stalled ribosomes, displacing the stalled mRNA. The ribosome then switches to translate the ORF on the tmRNA; the nascent peptide is terminated with the 'tag peptide' encoded by the tmRNA and targeted for degradation. The ribosome is freed to recommence translation, which seems to be the essential function of trans-translation. The chain is SsrA-binding protein from Synechococcus sp. (strain CC9605).